The sequence spans 427 residues: MSDSKEPRLQQLGLLEEEQLRGLGFRQTRGYKSLAGCLGHGPLVLQLLSFTLLAALLVQVSKVPSSISQEQSRQDAIYQNLTQFKAAVGELSEKSKLQEIYQELTQLKAAVGELPEKSKQQEIYQELSQLKAAVGELPEKSKQQEIYQELSQLKAAVGELPEKSKQQEIYQELTRLKAAVGELPEKSKQQEIYQELSQLKAAVGELPEKSKQQEIYQELSQLKAAVGELPEKSKQQEIYQELTQLKAAVGELPEKSKQQEIYQELTQLKAAVERLCRRCPWEWTFFQGNCYFMSNSQRNWHDSITACQEVGAQLVVIKSAEEQNFLQLQSSRSNRFTWMGLSDLNHEGTWQWVDGSPLLPSFKQYWNRGEPNNVGEEDCAEFSGNGWNDDKCNLAKFWICKKSAASCSRDEEQFLSPASATPNPPPE.

The Cytoplasmic portion of the chain corresponds to 1–37; that stretch reads MSDSKEPRLQQLGLLEEEQLRGLGFRQTRGYKSLAGC. 3 consecutive short sequence motifs (endocytosis signal) follow at residues 14-15, 16-18, and 31-34; these read LL, EEE, and YKSL. The chain crosses the membrane as a helical; Signal-anchor for type II membrane protein span at residues 38–58; the sequence is LGHGPLVLQLLSFTLLAALLV. The Extracellular portion of the chain corresponds to 59–427; that stretch reads QVSKVPSSIS…ASATPNPPPE (369 aa). Asn80 is a glycosylation site (N-linked (GlcNAc...) asparagine). 8 consecutive repeat copies span residues 96–118, 119–141, 142–164, 165–187, 188–210, 211–233, 234–256, and 257–280. Positions 96–280 are 8 X approximate tandem repeats; that stretch reads KLQEIYQELT…AVERLCRRCP (185 aa). Disulfide bonds link Cys279–Cys290, Cys307–Cys400, and Cys379–Cys392. The region spanning 286 to 401 is the C-type lectin domain; the sequence is FQGNCYFMSN…CNLAKFWICK (116 aa). The Ca(2+) site is built by Glu370, Asn372, Val374, Glu377, Asn388, and Asp389.

Homotetramer. Interacts with C1QBP; the interaction is indicative for a C1q:C1QBP:CD209 signaling complex. Interacts with ICAM2 and ICAM3 by binding to mannose-like carbohydrates. Interacts (via C-type lectin domain) with CEACAM1 (via Lewis X moieties); this interaction is regulated by the glycosylation pattern of CEACAM1 on cell types and regulates contact between dendritic cells and neutrophils.

It is found in the membrane. Pathogen-recognition receptor expressed on the surface of immature dendritic cells (DCs) and involved in initiation of primary immune response. Thought to mediate the endocytosis of pathogens which are subsequently degraded in lysosomal compartments. The receptor returns to the cell membrane surface and the pathogen-derived antigens are presented to resting T-cells via MHC class II proteins to initiate the adaptive immune response. Probably recognizes in a calcium-dependent manner high mannose N-linked oligosaccharides in a variety of pathogen antigens. Functionally, on DCs it is a high affinity receptor for ICAM2 and ICAM3 by binding to mannose-like carbohydrates. May act as a DC rolling receptor that mediates transendothelial migration of DC presursors from blood to tissues by binding endothelial ICAM2. Seems to regulate DC-induced T-cell proliferation by binding to ICAM3 on T-cells in the immunological synapse formed between DC and T-cells. This Gorilla gorilla gorilla (Western lowland gorilla) protein is CD209 antigen (CD209).